A 362-amino-acid polypeptide reads, in one-letter code: NAD(P)H-quinone oxidoreductase subunit 1, chloroplastic (362 aa).

The next 8 helical transmembrane spans lie at 27–47 (IWIL…LVIV), 103–123 (IAVI…HFVL), 128–148 (IGVF…LMAG), 164–184 (AAQS…ISLL), 202–222 (FFGW…ISSL), 247–267 (YSGI…LVSS), 303–323 (VIGI…SITI), and 342–362 (FLLP…LVSL).

Belongs to the complex I subunit 1 family. As to quaternary structure, NDH is composed of at least 16 different subunits, 5 of which are encoded in the nucleus.

It is found in the plastid. Its subcellular location is the chloroplast thylakoid membrane. It catalyses the reaction a plastoquinone + NADH + (n+1) H(+)(in) = a plastoquinol + NAD(+) + n H(+)(out). The enzyme catalyses a plastoquinone + NADPH + (n+1) H(+)(in) = a plastoquinol + NADP(+) + n H(+)(out). Functionally, NDH shuttles electrons from NAD(P)H:plastoquinone, via FMN and iron-sulfur (Fe-S) centers, to quinones in the photosynthetic chain and possibly in a chloroplast respiratory chain. The immediate electron acceptor for the enzyme in this species is believed to be plastoquinone. Couples the redox reaction to proton translocation, and thus conserves the redox energy in a proton gradient. This chain is NAD(P)H-quinone oxidoreductase subunit 1, chloroplastic, found in Saccharum hybrid (Sugarcane).